A 143-amino-acid polypeptide reads, in one-letter code: Ribosome-binding factor A (143 aa).

Residues K119–D143 are disordered. The span at Q122–S133 shows a compositional bias: polar residues.

This sequence belongs to the RbfA family. As to quaternary structure, monomer. Binds 30S ribosomal subunits, but not 50S ribosomal subunits or 70S ribosomes.

The protein localises to the cytoplasm. Its function is as follows. One of several proteins that assist in the late maturation steps of the functional core of the 30S ribosomal subunit. Associates with free 30S ribosomal subunits (but not with 30S subunits that are part of 70S ribosomes or polysomes). Required for efficient processing of 16S rRNA. May interact with the 5'-terminal helix region of 16S rRNA. The sequence is that of Ribosome-binding factor A from Shewanella frigidimarina (strain NCIMB 400).